The chain runs to 93 residues: Small ribosomal subunit protein uS19 (93 aa).

Belongs to the universal ribosomal protein uS19 family.

Protein S19 forms a complex with S13 that binds strongly to the 16S ribosomal RNA. The polypeptide is Small ribosomal subunit protein uS19 (Synechococcus sp. (strain JA-3-3Ab) (Cyanobacteria bacterium Yellowstone A-Prime)).